The sequence spans 894 residues: Alpha-actinin-2 (894 aa).

The interval 1 to 254 is actin-binding; the sequence is MNQIEPGVQY…IMTYVSCFYH (254 aa). 2 consecutive Calponin-homology (CH) domains span residues 38–142 and 151–257; these read KQQR…LRFA and TSAK…HAFA. Position 237 is a phosphothreonine (threonine 237). Spectrin repeat units lie at residues 281–391, 401–506, 516–627, and 637–740; these read RLME…WLLN, HLAE…ALER, QLHL…SLQE, and RLRR…EVET. 2 consecutive EF-hand domains span residues 753 to 788 and 789 to 824; these read EQMN…MGYD and LGEA…ETAD. Ca(2+) contacts are provided by aspartate 766, asparagine 770, aspartate 777, aspartate 802, asparagine 804, and threonine 808.

Belongs to the alpha-actinin family. As to quaternary structure, homodimer; antiparallel. Also forms heterodimers with ACTN3. Interacts with ADAM12, MYOZ1, MYOZ2 and MYOZ3. Interacts via its C-terminal region with the LDB3 PDZ domain. Interacts with XIRP2. Interacts with DST (via N-terminus). Interacts with PARVB. Interacts with SYNPO2. Post-translationally, ubiquitinated by FBXL22, leading to proteasomal degradation.

It is found in the cytoplasm. The protein resides in the myofibril. The protein localises to the sarcomere. It localises to the z line. Functionally, F-actin cross-linking protein which is thought to anchor actin to a variety of intracellular structures. This is a bundling protein. This is Alpha-actinin-2 (ACTN2) from Bos taurus (Bovine).